The primary structure comprises 829 residues: MFEPYVKIKKKRSVNEIYENENLEQQQHHLQQQQQQPATSDNCCCENGEPQNAPEVATATVAATSVAATSAAATVATGAAASSSSSGNCSRLQQLISTPPVLLRRSSLQQQQHQQQQHHPHTPAATATPPQQQQQQQAAPSVLQQHLGHLNYESGATAAAAATAAAAAATVATSRSGSATLAQHLATPSNILQAAFGSSNLQHILTRSAPSPSSSAISSNNCSSACAGNTHYNGGNSNSGSSSSNSNHHSNSIIASRLFGAASSSSSSSSSSASASSSSVAASSSSSSHHLHSHHSALTNSITNRINQSIRRHLNQQQHHHPLSASSSSASASPSASTSSSSSYQQSSVQQQHYNCAHPAQQQQHHHHHHSSSSSSSSSSSSSHHHHNSSSSSNSNNQQQPQQSPLCLVLLVKCPNSKEFCNAAANFCDKRLPVNECQASQTARVTSNLHASSSTMAVSRVPSPPLPEVNTPVAENWCYTQVKVVKFSYMWTINNFSFCREEMGEVLKSSTFSAGANDKLKWCLRVNPKGLDEESKDYLSLYLLLVSCNKSEVRAKFKFSILNAKREETKAMESQRAYRFVQGKDWGFKKFIRRDFLLDEANGLLPEDKLTIFCEVSVVADSVNISGQSNIVQFKVPECKLSEDLGNLFDNEKFSDVTLSVGGREFQAHKAILAARSDVFAAMFEHEMEERKLNRVAITDVDHEVLKEMLRFIYTGKAPNLEKMADDLLAAADKYALEKLKVMCEEALCVNLSVETAAETLILADLHSADQLKAQTIDFINTHATDVMETSGWQNMITTHSHLIAEAFRALATQQIPPIGPPRKRVKMS.

3 stretches are compositionally biased toward low complexity: residues 24 to 36 (EQQQ…QQQQ), 122 to 140 (TPAA…QAAP), and 266 to 288 (SSSS…SSSS). 4 disordered regions span residues 24–47 (EQQQ…CCEN), 106–142 (SSLQ…APSV), 266–296 (SSSS…SHHS), and 313–400 (HLNQ…NQQQ). Residues 313–322 (HLNQQQHHHP) are compositionally biased toward basic residues. 3 stretches are compositionally biased toward low complexity: residues 323-353 (LSAS…QQQH), 372-382 (SSSSSSSSSSS), and 389-400 (SSSSSNSNNQQQ). The MATH domain maps to 486 to 616 (KFSYMWTINN…EDKLTIFCEV (131 aa)). Residues 655–722 (SDVTLSVGGR…IYTGKAPNLE (68 aa)) form the BTB domain.

It belongs to the Tdpoz family. In terms of assembly, interacts with ci and gft/CUL3. Expressed near the anterio-posterior compartment boundary of antenna, leg and wing disks.

It is found in the nucleus. Its pathway is protein modification; protein ubiquitination. Functionally, involved in segment polarity. In complex with gft/CUL3, promotes ubiquitination of ci and its subsequent degradation by the proteasome, which results in hh signaling attenuation. This regulation may be important during eye formation for proper packing of ommatidia into a hexagonal array. This is Protein roadkill (rdx) from Drosophila melanogaster (Fruit fly).